The chain runs to 346 residues: Probable RNA methyltransferase PA1839 (346 aa).

Glu-91 acts as the Proton acceptor in catalysis. The region spanning 94–320 (LLPRGGLCVS…TKVRNSAGQD (227 aa)) is the Radical SAM core domain. Cys-101 and Cys-325 are joined by a disulfide. [4Fe-4S] cluster is bound by residues Cys-108, Cys-112, and Cys-115. S-adenosyl-L-methionine contacts are provided by residues 153–154 (GE), Ser-183, 206–208 (SLH), and Asn-282. Cys-325 serves as the catalytic S-methylcysteine intermediate.

Belongs to the radical SAM superfamily. RlmN family. It depends on [4Fe-4S] cluster as a cofactor.

Its subcellular location is the cytoplasm. The chain is Probable RNA methyltransferase PA1839 from Pseudomonas aeruginosa (strain ATCC 15692 / DSM 22644 / CIP 104116 / JCM 14847 / LMG 12228 / 1C / PRS 101 / PAO1).